A 391-amino-acid polypeptide reads, in one-letter code: MKFVDEARILVVAGDGGNGCVSFRREKYIPKGGPDGGDGGDGGDVYLLADENLNTLIDYRFEKSFRAERGQNGQSRDCTGRRGQDTTIKVPVGTRVRDAVTGEVLGDMIRHEQRLMVAKGGFHGLGNTRFKSSVNRAPRQRTMGTSGETRELMLELMLLADVGMLGMPNAGKSTFIRAVSAAKPKVADYPFTTLVPSLGVVRMDNEQSFVVADIPGLIKGASDGAGLGIRFLKHLERCRVLLHLIDICPVDGSDPVENARIIVNELQQYSEKLAEKPRRLVFNKVDLLEPEEARQRAQAIADELGWEGDFYMISAINRQGVKALCWDIMEFMKTQPRNMSRTEGETQPEKVEFMWDDYHKKQLEQVSEVDDDWDDDWDEDDDEGIEVIYKR.

One can recognise an Obg domain in the interval 1–159 (MKFVDEARIL…RELMLELMLL (159 aa)). The region spanning 160–333 (ADVGMLGMPN…LCWDIMEFMK (174 aa)) is the OBG-type G domain. Residues 166-173 (GMPNAGKS), 191-195 (FTTLV), 213-216 (DIPG), 283-286 (NKVD), and 314-316 (SAI) each bind GTP. Mg(2+) is bound by residues serine 173 and threonine 193.

Belongs to the TRAFAC class OBG-HflX-like GTPase superfamily. OBG GTPase family. In terms of assembly, monomer. Requires Mg(2+) as cofactor.

Its subcellular location is the cytoplasm. Functionally, an essential GTPase which binds GTP, GDP and possibly (p)ppGpp with moderate affinity, with high nucleotide exchange rates and a fairly low GTP hydrolysis rate. Plays a role in control of the cell cycle, stress response, ribosome biogenesis and in those bacteria that undergo differentiation, in morphogenesis control. The chain is GTPase Obg from Photorhabdus laumondii subsp. laumondii (strain DSM 15139 / CIP 105565 / TT01) (Photorhabdus luminescens subsp. laumondii).